Consider the following 238-residue polypeptide: 3-dehydroquinate dehydratase (238 aa).

3-dehydroquinate contacts are provided by residues 35 to 37 (ELR) and Arg-70. Catalysis depends on His-133, which acts as the Proton donor/acceptor. Residue Lys-160 is the Schiff-base intermediate with substrate of the active site. The 3-dehydroquinate site is built by Arg-202 and Gln-225.

This sequence belongs to the type-I 3-dehydroquinase family. In terms of assembly, homodimer.

It catalyses the reaction 3-dehydroquinate = 3-dehydroshikimate + H2O. The protein operates within metabolic intermediate biosynthesis; chorismate biosynthesis; chorismate from D-erythrose 4-phosphate and phosphoenolpyruvate: step 3/7. In terms of biological role, involved in the third step of the chorismate pathway, which leads to the biosynthesis of aromatic amino acids. Catalyzes the cis-dehydration of 3-dehydroquinate (DHQ) and introduces the first double bond of the aromatic ring to yield 3-dehydroshikimate. This chain is 3-dehydroquinate dehydratase, found in Staphylococcus aureus (strain MRSA252).